The following is a 691-amino-acid chain: Protein 4.2 (691 aa).

Residue Gly2 is the site of N-myristoyl glycine attachment. The interval 31–39 is band 3 binding; that stretch reads LTLRRGQSF. Position 248 is a phosphoserine (Ser248). Tyr570 carries the post-translational modification Phosphotyrosine.

The protein belongs to the transglutaminase superfamily. Transglutaminase family. In terms of assembly, component of the ankyrin-1 complex in the erythrocyte, composed of ANK1, RHCE, RHAG, SLC4A1, EPB42, GYPA, GYPB and AQP1. Interacts with SLC4A1 (via the cytoplasmic domain); this interaction is mediated by the SLC4A1 Band 3-I dimer. Interacts with ANK1 (via ANK 1-13 repeats). Interacts with AQP1 (via the C-terminal).

The protein localises to the cell membrane. Its subcellular location is the cytoplasm. The protein resides in the cytoskeleton. Functionally, component of the ankyrin-1 complex, a multiprotein complex involved in the stability and shape of the erythrocyte membrane. The protein is Protein 4.2 of Mus musculus (Mouse).